We begin with the raw amino-acid sequence, 507 residues long: Histidine ammonia-lyase (507 aa).

The segment at residues 141 to 143 (ASG) is a cross-link (5-imidazolinone (Ala-Gly)). Residue S142 is modified to 2,3-didehydroalanine (Ser).

It belongs to the PAL/histidase family. In terms of processing, contains an active site 4-methylidene-imidazol-5-one (MIO), which is formed autocatalytically by cyclization and dehydration of residues Ala-Ser-Gly.

It localises to the cytoplasm. It catalyses the reaction L-histidine = trans-urocanate + NH4(+). The protein operates within amino-acid degradation; L-histidine degradation into L-glutamate; N-formimidoyl-L-glutamate from L-histidine: step 1/3. The chain is Histidine ammonia-lyase from Burkholderia vietnamiensis (strain G4 / LMG 22486) (Burkholderia cepacia (strain R1808)).